The chain runs to 230 residues: Demethylmenaquinone methyltransferase (230 aa).

S-adenosyl-L-methionine contacts are provided by residues T62, D80, 100-101 (DG), and S117.

Belongs to the class I-like SAM-binding methyltransferase superfamily. MenG/UbiE family.

The catalysed reaction is a 2-demethylmenaquinol + S-adenosyl-L-methionine = a menaquinol + S-adenosyl-L-homocysteine + H(+). It participates in quinol/quinone metabolism; menaquinone biosynthesis; menaquinol from 1,4-dihydroxy-2-naphthoate: step 2/2. In terms of biological role, methyltransferase required for the conversion of demethylmenaquinol (DMKH2) to menaquinol (MKH2). This Corynebacterium glutamicum (strain ATCC 13032 / DSM 20300 / JCM 1318 / BCRC 11384 / CCUG 27702 / LMG 3730 / NBRC 12168 / NCIMB 10025 / NRRL B-2784 / 534) protein is Demethylmenaquinone methyltransferase.